The primary structure comprises 245 residues: Probable phosphatase YcdX (245 aa).

Zn(2+) is bound by residues H7, H9, H15, H40, E73, H101, H131, D192, and H194.

The protein belongs to the PHP family. As to quaternary structure, homotrimer. It depends on Zn(2+) as a cofactor.

This chain is Probable phosphatase YcdX, found in Escherichia coli (strain K12 / MC4100 / BW2952).